Reading from the N-terminus, the 356-residue chain is MSSNKTEKPTKKRLEDSAKKGQSFKSKDLIIACLTLGGIAYLVSYGSFNEFMGIIKIIIADNFDQSMADYSLAVFGIGLKYLIPFMLLCLVCSALPALLQAGFVLATEALKPNLSALNPVEGAKKLFSMRTVKDTVKTLLYLSSFVVAAIICWKKYKVEIFSQLNGNIVGIAVIWRELLLALVLTCLACALIVLLLDAIAEYFLTMKDMKMDKEEVKREMKEQEGNPEVKSKRREVHMEILSEQVKSDIENSRLIVANPTHITIGIYFKPELMPIPMISVYETNQRALAVRAYAEKVGVPVIVDIKLARSLFKTHRRYDLVSLEEIDEVLRLLVWLEEVENAGKDVIQPQENEVRH.

Helical transmembrane passes span 29-49 (LIIACLTLGGIAYLVSYGSFN), 72-92 (LAVFGIGLKYLIPFMLLCLVC), 132-152 (VKDTVKTLLYLSSFVVAAIIC), 179-199 (LLALVLTCLACALIVLLLDAI), and 261-281 (HITIGIYFKPELMPIPMISVY).

This sequence belongs to the type III secretion exporter family.

The protein resides in the cell inner membrane. In terms of biological role, involved in a secretory pathway responsible for the surface presentation of determinants needed for the entry of Salmonella species into mammalian cells. The polypeptide is Surface presentation of antigens protein SpaS (spaS) (Salmonella typhimurium (strain LT2 / SGSC1412 / ATCC 700720)).